The chain runs to 402 residues: Propionate kinase (402 aa).

Residues Asn11 and Lys18 each coordinate ATP. Residue Asn11 participates in Mg(2+) binding. A substrate-binding site is contributed by Arg86. The active-site Proton donor/acceptor is Asp143. ATP contacts are provided by residues His175, 203 to 207, 278 to 280, and 326 to 330; these read HLGNG, DLR, and GIGEN.

This sequence belongs to the acetokinase family. TdcD subfamily. In terms of assembly, homodimer. Requires Mg(2+) as cofactor.

It carries out the reaction propanoate + ATP = propanoyl phosphate + ADP. It functions in the pathway amino-acid degradation; L-threonine degradation via propanoate pathway; propanoate from L-threonine: step 4/4. Its function is as follows. Catalyzes the conversion of propionyl phosphate and ADP to propionate and ATP. This is Propionate kinase from Enterobacter sp. (strain 638).